Consider the following 199-residue polypeptide: DnaJ homolog subfamily C member 5B (199 aa).

At Ser-14 the chain carries Phosphoserine. Positions 19-84 (ALYEILGLHK…SKRSIYDKYG (66 aa)) constitute a J domain.

As to quaternary structure, interacts with the chaperone complex consisting of HSC70 and SGTA. In terms of processing, palmitoylated. Palmitoylation is not required for membrane association. In terms of tissue distribution, testis specific.

The protein localises to the membrane. The chain is DnaJ homolog subfamily C member 5B (DNAJC5B) from Homo sapiens (Human).